Reading from the N-terminus, the 250-residue chain is Large ribosomal subunit protein uL29m (250 aa).

The N-terminal 24 residues, 1–24, are a transit peptide targeting the mitochondrion; it reads MRPGAASIRTTGSVLAFLVPSAQC. The disordered stretch occupies residues 66–86; the sequence is VLSKKGSGDQPPKPVPITEKV.

Belongs to the universal ribosomal protein uL29 family. In terms of assembly, component of the mitochondrial large ribosomal subunit. Mature mitochondrial ribosomes consist of a small (37S) and a large (54S) subunit. The 37S subunit contains at least 33 different proteins and 1 molecule of RNA (15S). The 54S subunit contains at least 45 different proteins and 1 molecule of RNA (21S).

Its subcellular location is the mitochondrion. The protein is Large ribosomal subunit protein uL29m (MRPL4) of Phaeosphaeria nodorum (strain SN15 / ATCC MYA-4574 / FGSC 10173) (Glume blotch fungus).